A 594-amino-acid chain; its full sequence is RAS guanyl-releasing protein 2-B (594 aa).

Residues 3–121 (SSDLDKGLTI…SLIDIESVPS (119 aa)) enclose the N-terminal Ras-GEF domain. The region spanning 149–382 (DPAELAEHLT…YQLSLQREPR (234 aa)) is the Ras-GEF domain. Residues 377-403 (LQREPRARSTQTHAKSPPSPSPPLEEW) form a disordered region. EF-hand domains lie at 418 to 453 (HIEK…FPYL) and 455 to 482 (AFNE…ASSV). The Ca(2+) site is built by Asp431, Asp433, Asp435, His437, Glu442, Asp460, Asn462, Asp464, Lys466, and Glu471. The Phorbol-ester/DAG-type zinc-finger motif lies at 490–540 (IHNFAERTFLRPVSCQHCRNLILGIYKKGLKCKACGITCHKHCRDHLSIEC).

It belongs to the RASGRP family.

The protein resides in the cytoplasm. It localises to the cytosol. The protein localises to the cell membrane. It is found in the synapse. Its subcellular location is the synaptosome. In terms of biological role, functions as a calcium- and DAG-regulated nucleotide exchange factor specifically activating Rap through the exchange of bound GDP for GTP. May function in cell aggregation and adhesion. This Xenopus laevis (African clawed frog) protein is RAS guanyl-releasing protein 2-B (rasgrp2-b).